The primary structure comprises 182 residues: Adenine phosphoribosyltransferase (182 aa).

It belongs to the purine/pyrimidine phosphoribosyltransferase family. Homodimer.

The protein localises to the cytoplasm. It catalyses the reaction AMP + diphosphate = 5-phospho-alpha-D-ribose 1-diphosphate + adenine. It functions in the pathway purine metabolism; AMP biosynthesis via salvage pathway; AMP from adenine: step 1/1. Functionally, catalyzes a salvage reaction resulting in the formation of AMP, that is energically less costly than de novo synthesis. This chain is Adenine phosphoribosyltransferase, found in Campylobacter hominis (strain ATCC BAA-381 / DSM 21671 / CCUG 45161 / LMG 19568 / NCTC 13146 / CH001A).